A 235-amino-acid polypeptide reads, in one-letter code: Peroxynitrite isomerase 2 (235 aa).

Positions 82 to 88 (GVWRGEG) match the GXWXGXG motif. Heme b-binding residues include Lys-198 and His-225.

Belongs to the nitrobindin family. Homodimer. The cofactor is heme b.

The enzyme catalyses peroxynitrite = nitrate. It participates in nitrogen metabolism. Heme-binding protein able to scavenge peroxynitrite and to protect free L-tyrosine against peroxynitrite-mediated nitration, by acting as a peroxynitrite isomerase that converts peroxynitrite to nitrate. Therefore, this protein likely plays a role in peroxynitrite sensing and in the detoxification of reactive nitrogen and oxygen species (RNS and ROS, respectively). Is able to bind nitric oxide (NO) in vitro, but may act as a sensor of peroxynitrite levels in vivo. This is Peroxynitrite isomerase 2 from Mycolicibacterium paratuberculosis (strain ATCC BAA-968 / K-10) (Mycobacterium paratuberculosis).